The sequence spans 371 residues: GDP-mannose transporter (371 aa).

The Cytoplasmic segment spans residues 1–51 (MGVISFYLIGQLLYLIRKKYTTTYRQQQQHQYNMDSKHSTSSSSSGSLATR). Residues 52–72 (ISNSGPISIAAYCLSSILMTV) form a helical membrane-spanning segment. Residues 73 to 80 (TNKYVLSG) are Lumenal-facing. A helical transmembrane segment spans residues 81–101 (FSFNLNFFLLAVQSIVCIVTI). Topologically, residues 102–121 (GSLKSLNIITYRQFNKDEAK) are cytoplasmic. Residues 122-138 (KWSPIAFLLVAMIYTSS) form a helical membrane-spanning segment. The Lumenal portion of the chain corresponds to 139-145 (KALQYLS). Residues 146–162 (IPVYTIFKNLTIILIAY) form a helical membrane-spanning segment. Residues 163–171 (GEVIWFGGK) lie on the Cytoplasmic side of the membrane. A helical transmembrane segment spans residues 172–192 (VTTMALSSFLLMVLSSVIAYY). Residues 193–206 (GDNAAVKSHDDAFA) are Lumenal-facing. A helical transmembrane segment spans residues 207-227 (LYLGYFWMLTNCFASAAFVLI). Over 228–241 (MRKRIKLTNFKDFD) the chain is Cytoplasmic. Residues 242–262 (TMYYNNLLSIPILLICSFIFE) traverse the membrane as a helical segment. The Lumenal portion of the chain corresponds to 263 to 281 (DWSSANVSLNFPADNRVTT). Asn-268 carries N-linked (GlcNAc...) asparagine glycosylation. The chain crosses the membrane as a helical span at residues 282 to 302 (ITAMILSGASSVGISYCSAWC). The Cytoplasmic segment spans residues 303–309 (VRVTSST). The chain crosses the membrane as a helical span at residues 310–329 (TYSMVGALNKLPIALSGLIF). The Lumenal segment spans residues 330–332 (FEA). Residues 333-355 (AVNFWSVSSIFVGFGAGLVYAVA) form a helical membrane-spanning segment. Over 356–371 (KQKQQKEQSQQLPTTK) the chain is Cytoplasmic.

The protein belongs to the TPT transporter family. SLC35D subfamily. As to quaternary structure, homooligomer.

It localises to the golgi apparatus membrane. The protein localises to the cytoplasmic vesicle membrane. Its subcellular location is the endoplasmic reticulum membrane. Its function is as follows. Involved in the import of GDP-mannose from the cytoplasm into the Golgi lumen. Involved in hyphal formation. The polypeptide is GDP-mannose transporter (VRG4) (Candida albicans (strain SC5314 / ATCC MYA-2876) (Yeast)).